A 336-amino-acid polypeptide reads, in one-letter code: Fructose-1,6-bisphosphatase class 1 (336 aa).

Positions 90, 112, 114, and 115 each coordinate Mg(2+). Substrate-binding positions include 115 to 118 (DGSS), N211, and K277. E283 provides a ligand contact to Mg(2+).

This sequence belongs to the FBPase class 1 family. In terms of assembly, homotetramer. Mg(2+) serves as cofactor.

The protein localises to the cytoplasm. The catalysed reaction is beta-D-fructose 1,6-bisphosphate + H2O = beta-D-fructose 6-phosphate + phosphate. Its pathway is carbohydrate biosynthesis; gluconeogenesis. This is Fructose-1,6-bisphosphatase class 1 from Pseudomonas putida (strain W619).